A 249-amino-acid polypeptide reads, in one-letter code: Small ribosomal subunit protein uS2 (249 aa).

It belongs to the universal ribosomal protein uS2 family.

The polypeptide is Small ribosomal subunit protein uS2 (Bordetella parapertussis (strain 12822 / ATCC BAA-587 / NCTC 13253)).